Reading from the N-terminus, the 98-residue chain is Alpha-defensin 1 (98 aa).

The N-terminal stretch at 1–19 (MRTLTLLTALLLLALQVQT) is a signal peptide. Positions 20 to 63 (QSLEETADQVPAQDQPGAEAQDITISFAGDERSAREASKSLIGT) are excised as a propeptide. 3 disulfides stabilise this stretch: Cys-66–Cys-96, Cys-68–Cys-84, and Cys-74–Cys-95.

The protein belongs to the alpha-defensin family. In terms of tissue distribution, paneth cells of the small bowel.

It is found in the secreted. Its function is as follows. Has broad-spectrum antimicrobial properties. The antimicrobial activity decreases in the present of salt in vitro. Binds anionic phospholipids, which leads to the aggregation of liposomes in vitro. Membrane permeabilization of the target cells is an essential part of the peptide's mode of antimicrobial activity. No hemolytic activity against sheep or horse erythrocytes. Has antibacterial activity against the bacterial horse pathogens Gram-positive R.equi ATCC 33701 P(-) (minimum bactericidal concentration or MBC=5 ug/ml) and R.equi ATCC 33701 P(+) (MBC=5 ug/ml), which are resistant against beta-lactam antibiotics. Also has antibacterial activity against highly infectious wild-type strain R.equi 85F P(+) (MBC=5 ug/ml), S.equi subsp. equi (MBC=5 ug/ml), S.equi subsp. zooepidemicus (MBC=5 ug/ml), S.dysgalactiae subsp. equisimilis (MBC=10 ug/ml), S.choleraesuis subsp. choleraesuis serovar Typhimurium (MBC=10 ug/ml), and P.multocida subsp. multocida (MBC=&gt;10 ug/ml). Probably contributes to the antimicrobial barrier function of the small bowel mucosa. The chain is Alpha-defensin 1 from Equus caballus (Horse).